Consider the following 155-residue polypeptide: 6,7-dimethyl-8-ribityllumazine synthase (155 aa).

5-amino-6-(D-ribitylamino)uracil contacts are provided by residues Phe-22, 57–59 (AVE), and 81–83 (TVI). 86 to 87 (GT) lines the (2S)-2-hydroxy-3-oxobutyl phosphate pocket. His-89 acts as the Proton donor in catalysis. Phe-114 provides a ligand contact to 5-amino-6-(D-ribitylamino)uracil. Residue Arg-128 coordinates (2S)-2-hydroxy-3-oxobutyl phosphate.

The protein belongs to the DMRL synthase family. As to quaternary structure, forms an icosahedral capsid composed of 60 subunits, arranged as a dodecamer of pentamers.

The catalysed reaction is (2S)-2-hydroxy-3-oxobutyl phosphate + 5-amino-6-(D-ribitylamino)uracil = 6,7-dimethyl-8-(1-D-ribityl)lumazine + phosphate + 2 H2O + H(+). Its pathway is cofactor biosynthesis; riboflavin biosynthesis; riboflavin from 2-hydroxy-3-oxobutyl phosphate and 5-amino-6-(D-ribitylamino)uracil: step 1/2. Its function is as follows. Catalyzes the formation of 6,7-dimethyl-8-ribityllumazine by condensation of 5-amino-6-(D-ribitylamino)uracil with 3,4-dihydroxy-2-butanone 4-phosphate. This is the penultimate step in the biosynthesis of riboflavin. This chain is 6,7-dimethyl-8-ribityllumazine synthase, found in Psychromonas ingrahamii (strain DSM 17664 / CCUG 51855 / 37).